A 181-amino-acid polypeptide reads, in one-letter code: Large ribosomal subunit protein uL5 (181 aa).

It belongs to the universal ribosomal protein uL5 family. Part of the 50S ribosomal subunit; contacts the 5S rRNA and probably tRNA. Forms a bridge to the 30S subunit in the 70S ribosome.

Its function is as follows. This is one of the proteins that bind and probably mediate the attachment of the 5S RNA into the large ribosomal subunit, where it forms part of the central protuberance. In the 70S ribosome it contacts protein S13 of the 30S subunit (bridge B1b), connecting the 2 subunits; this bridge is implicated in subunit movement. May contact the P site tRNA; the 5S rRNA and some of its associated proteins might help stabilize positioning of ribosome-bound tRNAs. The polypeptide is Large ribosomal subunit protein uL5 (Methanococcus aeolicus (strain ATCC BAA-1280 / DSM 17508 / OCM 812 / Nankai-3)).